We begin with the raw amino-acid sequence, 397 residues long: RNA binding protein fox-1 homolog 1 (397 aa).

Positions 1 to 121 (MNCEREQLRG…NKSQPKRLHV (121 aa)) are disordered. Residues 70–87 (QTHSEQSPADTSAQTVSG) are compositionally biased toward polar residues. Low complexity predominate over residues 88-99 (TATQTDDAAPTD). Residues 100 to 113 (GQPQTQPSENTENK) show a composition bias toward polar residues. The RRM domain maps to 117–193 (KRLHVSNIPF…RKIEVNNATA (77 aa)). Arg317 is subject to Asymmetric dimethylarginine. Residue Arg388 is modified to Omega-N-methylarginine.

In terms of assembly, binds to the C-terminus of ATXN2. As to expression, predominantly expressed in muscle and brain.

The protein localises to the nucleus. The protein resides in the cytoplasm. Functionally, RNA-binding protein that regulates alternative splicing events by binding to 5'-UGCAUGU-3' elements. Regulates alternative splicing of tissue-specific exons and of differentially spliced exons during erythropoiesis. This Homo sapiens (Human) protein is RNA binding protein fox-1 homolog 1 (RBFOX1).